Here is a 329-residue protein sequence, read N- to C-terminus: L-threonine dehydratase catabolic TdcB (329 aa).

Residue Arg-53–Thr-54 coordinates AMP. Lys-58 is subject to N6-(pyridoxal phosphate)lysine. Residues Gln-88, Asp-119–Tyr-120, and Asn-314 contribute to the AMP site.

It belongs to the serine/threonine dehydratase family. In terms of assembly, in the native structure, TdcB is in a dimeric form, whereas in the TdcB-AMP complex, it exists in a tetrameric form (dimer of dimers). Requires pyridoxal 5'-phosphate as cofactor.

It carries out the reaction L-threonine = 2-oxobutanoate + NH4(+). The enzyme catalyses L-serine = pyruvate + NH4(+). It participates in amino-acid degradation; L-threonine degradation via propanoate pathway; propanoate from L-threonine: step 1/4. With respect to regulation, each protein molecule can bind up to four molecules of AMP, which act as an allosteric activator to the enzyme. In terms of biological role, catalyzes the anaerobic formation of alpha-ketobutyrate and ammonia from threonine in a two-step reaction. The first step involved a dehydration of threonine and a production of enamine intermediates (aminocrotonate), which tautomerizes to its imine form (iminobutyrate). Both intermediates are unstable and short-lived. The second step is the nonenzymatic hydrolysis of the enamine/imine intermediates to form 2-ketobutyrate and free ammonia. In the low water environment of the cell, the second step is accelerated by RidA. TdcB also dehydrates serine to yield pyruvate via analogous enamine/imine intermediates. This Escherichia coli O157:H7 protein is L-threonine dehydratase catabolic TdcB (tdcB).